The chain runs to 288 residues: 4-diphosphocytidyl-2-C-methyl-D-erythritol kinase (288 aa).

The active site involves Lys11. 95 to 105 (PVAAGMAGGSS) is an ATP binding site. Residue Asp137 is part of the active site.

Belongs to the GHMP kinase family. IspE subfamily.

The catalysed reaction is 4-CDP-2-C-methyl-D-erythritol + ATP = 4-CDP-2-C-methyl-D-erythritol 2-phosphate + ADP + H(+). Its pathway is isoprenoid biosynthesis; isopentenyl diphosphate biosynthesis via DXP pathway; isopentenyl diphosphate from 1-deoxy-D-xylulose 5-phosphate: step 3/6. Its function is as follows. Catalyzes the phosphorylation of the position 2 hydroxy group of 4-diphosphocytidyl-2C-methyl-D-erythritol. The chain is 4-diphosphocytidyl-2-C-methyl-D-erythritol kinase from Lachnospira eligens (strain ATCC 27750 / DSM 3376 / VPI C15-48 / C15-B4) (Eubacterium eligens).